The following is a 142-amino-acid chain: Neuritin (142 aa).

Residues 1-27 form the signal peptide; the sequence is MGLTLSGRYISLFLAVQIAYLLQAVRA. Ala-112 carries GPI-anchor amidated alanine lipidation. A propeptide spans 113–142 (removed in mature form); it reads GGNGAIRSSVPFGVTLLITALSALVTWMQF.

Belongs to the neuritin family.

The protein localises to the cell membrane. It localises to the synapse. Its function is as follows. Modulates postsynaptic dendritic arbor elaboration and synaptic maturation. This chain is Neuritin (nrn1), found in Danio rerio (Zebrafish).